The following is a 700-amino-acid chain: Elongation factor G (700 aa).

A tr-type G domain is found at 10 to 286 (TKVRNIGIMA…AVIDYLPSPL (277 aa)). Residues 19-26 (AHIDAGKT), 83-87 (DTPGH), and 137-140 (NKMD) contribute to the GTP site.

Belongs to the TRAFAC class translation factor GTPase superfamily. Classic translation factor GTPase family. EF-G/EF-2 subfamily.

The protein resides in the cytoplasm. Catalyzes the GTP-dependent ribosomal translocation step during translation elongation. During this step, the ribosome changes from the pre-translocational (PRE) to the post-translocational (POST) state as the newly formed A-site-bound peptidyl-tRNA and P-site-bound deacylated tRNA move to the P and E sites, respectively. Catalyzes the coordinated movement of the two tRNA molecules, the mRNA and conformational changes in the ribosome. The chain is Elongation factor G from Kineococcus radiotolerans (strain ATCC BAA-149 / DSM 14245 / SRS30216).